The sequence spans 807 residues: Leucine-rich repeat-containing protein 41 (807 aa).

The interval 45 to 54 is interaction with Elongin BC complex; sequence ALFELCGRAV. Phosphoserine occurs at positions 155, 276, and 326. Disordered regions lie at residues 269–290, 304–335, and 349–403; these read ASRG…RRPR, TRRK…AIGG, and ASGT…GSGA. At T327 the chain carries Phosphothreonine. Low complexity predominate over residues 352-381; sequence TKQPSAPAAASASSSTSSKRAPASSASQPK. The residue at position 368 (S368) is a Phosphoserine. A compositionally biased stretch (basic residues) spans 382-396; the sequence is PLKRFKRAAGKKGPR. LRR repeat units lie at residues 482–502, 513–525, 526–550, 608–632, 638–661, 696–723, and 726–747; these read WVSL…IFRL, AGCR…LSDL, FSPL…VLSI, SGSL…LVLQ, NLSL…VLFL, NSTL…VFSE, and SSSL…LLEF.

Part of an E3 ubiquitin-protein ligase complex with Elongin BC (ELOB and ELOC), RBX1 and CUL5. Component of a probable ECS(LRRC41) complex which contains CUL5, RNF7/RBX2, Elongin BC and LRRC41. Interacts with CUL5, RNF7, ELOB and ELOC.

It functions in the pathway protein modification; protein ubiquitination. Functionally, probable substrate recognition component of an ECS (Elongin BC-CUL2/5-SOCS-box protein) E3 ubiquitin ligase complex which mediates the ubiquitination and subsequent proteasomal degradation of target proteins. The chain is Leucine-rich repeat-containing protein 41 (Lrrc41) from Mus musculus (Mouse).